Here is a 919-residue protein sequence, read N- to C-terminus: Translocase of chloroplast 101, chloroplastic (919 aa).

2 disordered regions span residues 20–47 and 64–211; these read SASRSLSEEVGVDPALVSEGAPEGVIEG and VDDE…NETR. Residues 73–88 are compositionally biased toward basic and acidic residues; it reads SENKAVVETEKVESKP. The segment covering 96-128 has biased composition (acidic residues); sequence FAEEDGDSDADAEDEDDEDDEDDDEDDDDEDDK. The span at 182 to 207 shows a compositional bias: polar residues; it reads QRPNGAPSTQLTATTEENANSDTAEG. Residues 284 to 513 enclose the AIG1-type G domain; the sequence is DFACTILVLG…KLQETATPGR (230 aa). Positions 293-300 are G1; it reads GKTGVGKS. Residue 296-301 coordinates GTP; sequence GVGKSA. Mg(2+) is bound at residue serine 300. A G2 region spans residues 319–323; sequence PSTNK. A G3 region spans residues 340–343; that stretch reads DTPG. Residues 412–415 form a G4 region; the sequence is THAS. GTP contacts are provided by residues histidine 413 and 461–462; that span reads EN. The tract at residues 461 to 463 is G5; the sequence is ENH. 2 disordered regions span residues 540-585 and 611-650; these read LPDE…LTKE and RRRKEMKKRQAQMSKEELAQPDEADDEAGQPAAVPVPMPD. The span at 543–567 shows a compositional bias: acidic residues; that stretch reads EQLDESDESDDDEEEEDSEADDYDE. Over residues 574-585 the composition is skewed to basic and acidic residues; it reads LSKEELEELTKE. Residues 629–638 are compositionally biased toward acidic residues; the sequence is AQPDEADDEA. Over residues 641-650 the composition is skewed to low complexity; it reads PAAVPVPMPD. Residues 893 to 914 form a helical membrane-spanning segment; the sequence is MVLIGIVPILRSLINCRFGFGG.

Belongs to the TRAFAC class TrmE-Era-EngA-EngB-Septin-like GTPase superfamily. AIG1/Toc34/Toc159-like paraseptin GTPase family. TOC159 subfamily. In terms of assembly, part of the TOC core complex. It depends on Mg(2+) as a cofactor.

The protein resides in the plastid. It localises to the chloroplast outer membrane. In terms of biological role, GTPase involved in protein precursor import into chloroplasts. Seems to recognize chloroplast-destined precursor proteins and regulate their presentation to the translocation channel through GTP hydrolysis. Probably specialized in the import of nuclear encoded non-photosynthetic preproteins from the cytoplasm to the chloroplast. The sequence is that of Translocase of chloroplast 101, chloroplastic from Physcomitrium patens (Spreading-leaved earth moss).